A 323-amino-acid chain; its full sequence is ComG operon protein 2 (323 aa).

Helical transmembrane passes span 93 to 113, 143 to 163, and 296 to 316; these read YPLF…SIII, LVII…WLVF, and MIYG…LVPM.

The protein belongs to the GSP F family.

It localises to the cell membrane. In terms of biological role, required for transformation and DNA binding. This Bacillus subtilis (strain 168) protein is ComG operon protein 2 (comGB).